A 373-amino-acid chain; its full sequence is Phosphoserine aminotransferase (373 aa).

L-glutamate is bound at residue Arg-46. Pyridoxal 5'-phosphate is bound by residues Phe-104, Thr-150, Asp-172, and Gln-195. Lys-196 carries the post-translational modification N6-(pyridoxal phosphate)lysine. Pyridoxal 5'-phosphate is bound at residue 247–248; the sequence is NT.

It belongs to the class-V pyridoxal-phosphate-dependent aminotransferase family. SerC subfamily. As to quaternary structure, homodimer. Requires pyridoxal 5'-phosphate as cofactor.

It localises to the cytoplasm. The enzyme catalyses O-phospho-L-serine + 2-oxoglutarate = 3-phosphooxypyruvate + L-glutamate. It carries out the reaction 4-(phosphooxy)-L-threonine + 2-oxoglutarate = (R)-3-hydroxy-2-oxo-4-phosphooxybutanoate + L-glutamate. It participates in amino-acid biosynthesis; L-serine biosynthesis; L-serine from 3-phospho-D-glycerate: step 2/3. It functions in the pathway cofactor biosynthesis; pyridoxine 5'-phosphate biosynthesis; pyridoxine 5'-phosphate from D-erythrose 4-phosphate: step 3/5. Catalyzes the reversible conversion of 3-phosphohydroxypyruvate to phosphoserine and of 3-hydroxy-2-oxo-4-phosphonooxybutanoate to phosphohydroxythreonine. The protein is Phosphoserine aminotransferase of Rhodococcus jostii (strain RHA1).